Consider the following 579-residue polypeptide: Pre-mRNA-processing factor 17 (579 aa).

Residues 1-19 show a composition bias toward low complexity; it reads MSAAIAALAASYGSGSGSE. Disordered regions lie at residues 1 to 47 and 204 to 237; these read MSAA…PSSK and DVAK…PGEE. A Phosphoserine modification is found at Ser46. WD repeat units lie at residues 286–326, 330–369, 371–413, 416–455, 459–498, 504–545, and 548–578; these read GHTK…RCLR, GHSK…CISR, TNRK…IVQE, RHLG…DFKY, PSMH…RLNK, GHMV…LYSR, and AHDK…IKLW.

In terms of assembly, component of the pre-catalytic and catalytic spliceosome complexes. Component of the postcatalytic spliceosome P complex. Interacts with PPIL1; this interaction leads to CDC40 isomerization. Post-translationally, undergoes isomerization of the peptide bond between Gly-94 and Pro-95. The reaction is catalyzed by PPIL1.

The protein localises to the nucleus. It is found in the nucleus speckle. In terms of biological role, required for pre-mRNA splicing as component of the activated spliceosome. Plays an important role in embryonic brain development; this function does not require proline isomerization. In Homo sapiens (Human), this protein is Pre-mRNA-processing factor 17 (CDC40).